The chain runs to 185 residues: MVTMSKQTCIELPVNPIVLGKLGSTYGIRGWLRVFSSTEHAEDIFAYQPWFIQRAGRWQHIELEAWKHHNQDMIIKIKGIDDLDAANSLTNCEIIVDSEQLPELDTGDYYWKDLIGCQVISTAGYNLGTVNDMMETGSNDVMVVKANLKDAFGVKERLIPFLDGQVIKKVDLATKTIEVDWDPGF.

Residues 106 to 185 form the PRC barrel domain; it reads TGDYYWKDLI…TIEVDWDPGF (80 aa).

Belongs to the RimM family. As to quaternary structure, binds ribosomal protein uS19.

Its subcellular location is the cytoplasm. Its function is as follows. An accessory protein needed during the final step in the assembly of 30S ribosomal subunit, possibly for assembly of the head region. Essential for efficient processing of 16S rRNA. May be needed both before and after RbfA during the maturation of 16S rRNA. It has affinity for free ribosomal 30S subunits but not for 70S ribosomes. The protein is Ribosome maturation factor RimM of Photorhabdus laumondii subsp. laumondii (strain DSM 15139 / CIP 105565 / TT01) (Photorhabdus luminescens subsp. laumondii).